We begin with the raw amino-acid sequence, 171 residues long: UPF0312 protein MW2606 (171 aa).

Belongs to the UPF0312 family.

This chain is UPF0312 protein MW2606, found in Staphylococcus aureus (strain MW2).